A 251-amino-acid chain; its full sequence is uncharacterized protein (251 aa).

This sequence belongs to the FAM243 family.

This is an uncharacterized protein from Bos taurus (Bovine).